Here is a 420-residue protein sequence, read N- to C-terminus: Putative RNA-binding protein Alsin2 (420 aa).

Residues 99–130 adopt a coiled-coil conformation; that stretch reads IADCDRRTDSAKQRLKETQEELTAEVAEKANA. Composition is skewed to basic and acidic residues over residues 242–259, 282–363, and 373–399; these read AELKRTGKMTDREDEGRG, RERQ…RFGD, and HHRDDRRRSRSRERSPRERRNFNHFRD. A disordered region spans residues 242–420; it reads AELKRTGKMT…SYSRERNYRR (179 aa).

Belongs to the Luc7 family. As to quaternary structure, interacts with x16 (via Arg/Ser-rich region).

May bind to RNA via its Arg/Ser-rich domain. This is Putative RNA-binding protein Alsin2 from Drosophila melanogaster (Fruit fly).